A 294-amino-acid chain; its full sequence is Nucleotide-binding protein Smal_0950 (294 aa).

16 to 23 (GLSGSGKS) is a binding site for ATP. Position 69-72 (69-72 (DVRG)) interacts with GTP.

The protein belongs to the RapZ-like family.

In terms of biological role, displays ATPase and GTPase activities. The chain is Nucleotide-binding protein Smal_0950 from Stenotrophomonas maltophilia (strain R551-3).